Here is a 283-residue protein sequence, read N- to C-terminus: Pantothenate synthetase (283 aa).

ATP is bound at residue 30–37; that stretch reads MGNLHAGH. The Proton donor role is filled by H37. A (R)-pantoate-binding site is contributed by Q61. Position 61 (Q61) interacts with beta-alanine. 149–152 lines the ATP pocket; sequence GEKD. Q155 serves as a coordination point for (R)-pantoate. ATP is bound by residues V178 and 186–189; that span reads LSSR.

Belongs to the pantothenate synthetase family. As to quaternary structure, homodimer.

The protein resides in the cytoplasm. It carries out the reaction (R)-pantoate + beta-alanine + ATP = (R)-pantothenate + AMP + diphosphate + H(+). It functions in the pathway cofactor biosynthesis; (R)-pantothenate biosynthesis; (R)-pantothenate from (R)-pantoate and beta-alanine: step 1/1. Its function is as follows. Catalyzes the condensation of pantoate with beta-alanine in an ATP-dependent reaction via a pantoyl-adenylate intermediate. In Pseudomonas aeruginosa (strain UCBPP-PA14), this protein is Pantothenate synthetase.